We begin with the raw amino-acid sequence, 67 residues long: Probable pilin MJ1400 (67 aa).

Residues 1 to 13 (MKFIMKFIKSNKG) constitute a propeptide that is removed on maturation. A QXSXEXXXL motif is present at residues 14–22 (QISLEFSLL).

In terms of processing, the N-terminus is cleaved by the prepilin peptidase EppA, which recognizes the class III signal sequence.

It localises to the secreted. The protein localises to the cell surface. It is found in the fimbrium. The chain is Probable pilin MJ1400 from Methanocaldococcus jannaschii (strain ATCC 43067 / DSM 2661 / JAL-1 / JCM 10045 / NBRC 100440) (Methanococcus jannaschii).